Reading from the N-terminus, the 119-residue chain is UPF0231 protein ECA3777 (119 aa).

The protein belongs to the UPF0231 family.

The protein is UPF0231 protein ECA3777 of Pectobacterium atrosepticum (strain SCRI 1043 / ATCC BAA-672) (Erwinia carotovora subsp. atroseptica).